The sequence spans 378 residues: S-(hydroxymethyl)glutathione dehydrogenase (378 aa).

Zn(2+) contacts are provided by C49, H71, C101, C104, C107, C115, and C178.

Belongs to the zinc-containing alcohol dehydrogenase family. Class-III subfamily. Homodimer. Zn(2+) serves as cofactor.

Its subcellular location is the cytoplasm. The enzyme catalyses S-(hydroxymethyl)glutathione + NADP(+) = S-formylglutathione + NADPH + H(+). It carries out the reaction S-(hydroxymethyl)glutathione + NAD(+) = S-formylglutathione + NADH + H(+). It catalyses the reaction a primary alcohol + NAD(+) = an aldehyde + NADH + H(+). The catalysed reaction is a secondary alcohol + NAD(+) = a ketone + NADH + H(+). The enzyme catalyses S-nitrosoglutathione + NADH + H(+) = S-(hydroxysulfenamide)glutathione + NAD(+). In terms of biological role, has high formaldehyde dehydrogenase activity in the presence of glutathione and catalyzes the oxidation of normal alcohols in a reaction that is not GSH-dependent. In addition, hemithiolacetals other than those formed from GSH, including omega-thiol fatty acids, also are substrates. Also acts as a S-nitroso-glutathione reductase by catalyzing the NADH-dependent reduction of S-nitrosoglutathione. The sequence is that of S-(hydroxymethyl)glutathione dehydrogenase (frmA) from Haemophilus influenzae (strain ATCC 51907 / DSM 11121 / KW20 / Rd).